Here is a 662-residue protein sequence, read N- to C-terminus: Eukaryotic peptide chain release factor GTP-binding subunit (662 aa).

Residues Met-1–Asp-220 are disordered. A compositionally biased stretch (low complexity) spans Ala-26–Pro-40. Positions Tyr-62 to Thr-89 are enriched in polar residues. Positions Asp-91–Lys-102 are enriched in basic and acidic residues. A compositionally biased stretch (polar residues) spans Gly-122–Ile-134. The segment covering Thr-141–Thr-158 has biased composition (low complexity). Residue Thr-182 is modified to Phosphothreonine. Residues Ala-192–Thr-213 are compositionally biased toward low complexity. Positions Lys-236–Lys-464 constitute a tr-type G domain. The segment at Gly-245–Ser-252 is G1. Gly-245–Ser-252 is a binding site for GTP. Residues Gly-301–Glu-305 form a G2 region. Residues Asp-322–Gly-325 form a G3 region. GTP-binding positions include Asn-384–Asp-387 and Ala-428–Tyr-429. Positions Asn-384–Asp-387 are G4. The segment at Ser-427–Tyr-429 is G5. At Ser-539 the chain carries Phosphoserine.

Belongs to the TRAFAC class translation factor GTPase superfamily. Classic translation factor GTPase family. ERF3 subfamily. In terms of assembly, component of the eRF1-eRF3-GTP ternary complex, composed of sup45/eRF1, sup35/eRF3 and GTP.

The protein resides in the cytoplasm. It catalyses the reaction GTP + H2O = GDP + phosphate + H(+). GTPase component of the eRF1-eRF3-GTP ternary complex, a ternary complex that mediates translation termination in response to the termination codons. Sup35/eRF3 mediates sup45/ERF1 delivery to stop codons: The eRF1-eRF3-GTP complex binds to a stop codon in the ribosomal A-site. GTP hydrolysis by sup35/eRF3 induces a conformational change that leads to its dissociation, permitting sup45/eRF1 to accommodate fully in the A-site. The sequence is that of Eukaryotic peptide chain release factor GTP-binding subunit (sup35) from Schizosaccharomyces pombe (strain 972 / ATCC 24843) (Fission yeast).